Reading from the N-terminus, the 583-residue chain is Putative rhophilin-2-like protein RHPN2P1 (583 aa).

One can recognise a BRO1 domain in the interval 26 to 375 (PLIPLGLKET…RLTYAQHQED (350 aa)). Residues 412–490 (RSNRFTAEEG…DEIEMKVVSL (79 aa)) enclose the PDZ domain.

This chain is Putative rhophilin-2-like protein RHPN2P1 (RHPN2P1), found in Homo sapiens (Human).